The sequence spans 158 residues: Cyclic pyranopterin monophosphate synthase (158 aa).

Substrate contacts are provided by residues 74–76 and 112–113; these read MCH and ME. Residue Asp127 is part of the active site.

It belongs to the MoaC family. As to quaternary structure, homohexamer; trimer of dimers.

The catalysed reaction is (8S)-3',8-cyclo-7,8-dihydroguanosine 5'-triphosphate = cyclic pyranopterin phosphate + diphosphate. It functions in the pathway cofactor biosynthesis; molybdopterin biosynthesis. Its function is as follows. Catalyzes the conversion of (8S)-3',8-cyclo-7,8-dihydroguanosine 5'-triphosphate to cyclic pyranopterin monophosphate (cPMP). The chain is Cyclic pyranopterin monophosphate synthase from Helicobacter pylori (strain J99 / ATCC 700824) (Campylobacter pylori J99).